Consider the following 316-residue polypeptide: Acetyl-coenzyme A carboxylase carboxyl transferase subunit alpha (316 aa).

The CoA carboxyltransferase C-terminal domain occupies 36 to 290 (LLEERLARLR…KEALLKALEE (255 aa)).

Belongs to the AccA family. In terms of assembly, acetyl-CoA carboxylase is a heterohexamer composed of biotin carboxyl carrier protein (AccB), biotin carboxylase (AccC) and two subunits each of ACCase subunit alpha (AccA) and ACCase subunit beta (AccD).

It is found in the cytoplasm. It catalyses the reaction N(6)-carboxybiotinyl-L-lysyl-[protein] + acetyl-CoA = N(6)-biotinyl-L-lysyl-[protein] + malonyl-CoA. Its pathway is lipid metabolism; malonyl-CoA biosynthesis; malonyl-CoA from acetyl-CoA: step 1/1. In terms of biological role, component of the acetyl coenzyme A carboxylase (ACC) complex. First, biotin carboxylase catalyzes the carboxylation of biotin on its carrier protein (BCCP) and then the CO(2) group is transferred by the carboxyltransferase to acetyl-CoA to form malonyl-CoA. This is Acetyl-coenzyme A carboxylase carboxyl transferase subunit alpha from Thermus thermophilus (strain ATCC 27634 / DSM 579 / HB8).